A 29-amino-acid chain; its full sequence is Brevinin-2Rc (29 aa).

Residues Cys23 and Cys29 are joined by a disulfide bond.

In terms of tissue distribution, expressed by the skin glands.

The protein localises to the secreted. Its function is as follows. Antimicrobial peptide. The sequence is that of Brevinin-2Rc from Pelophylax ridibundus (Marsh frog).